The sequence spans 1612 residues: DNA topoisomerase 2-beta (1612 aa).

Alanine 2 is subject to N-acetylalanine. Lysine 3 is modified (N6-acetyllysine). Residues lysine 21 and lysine 22 each participate in a glycyl lysine isopeptide (Lys-Gly) (interchain with G-Cter in SUMO2) cross-link. ATP-binding positions include asparagine 100, asparagine 129, and 157 to 159; that span reads SSN. Residues lysine 165 and lysine 166 each participate in a glycyl lysine isopeptide (Lys-Gly) (interchain with G-Cter in SUMO2) cross-link. Residue 170-177 coordinates ATP; the sequence is GRNGYGAK. Glycyl lysine isopeptide (Lys-Gly) (interchain with G-Cter in SUMO2) cross-links involve residues lysine 216 and lysine 287. The interval 351 to 353 is interaction with DNA; the sequence is KKK. Glycyl lysine isopeptide (Lys-Gly) (interchain with G-Cter in SUMO2) cross-links involve residues lysine 355 and lysine 361. 385 to 387 is a binding site for ATP; that stretch reads QTK. Residues lysine 425, lysine 427, and lysine 434 each participate in a glycyl lysine isopeptide (Lys-Gly) (interchain with G-Cter in SUMO2) cross-link. The Toprim domain maps to 464-581; sequence CTLILTEGDS…SLLKHGFLEE (118 aa). Mg(2+) is bound by residues glutamate 470, aspartate 550, and aspartate 552. Glycyl lysine isopeptide (Lys-Gly) (interchain with G-Cter in SUMO2) cross-links involve residues lysine 588, lysine 593, lysine 623, lysine 631, lysine 634, lysine 664, and lysine 700. One can recognise a Topo IIA-type catalytic domain in the interval 724–1177; that stretch reads IPSLVDGFKP…SPSDLWKEDL (454 aa). The O-(5'-phospho-DNA)-tyrosine intermediate role is filled by tyrosine 814. The segment at 999-1008 is interaction with DNA; that stretch reads KLQTTLTCNS. Lysine 1080 participates in a covalent cross-link: Glycyl lysine isopeptide (Lys-Gly) (interchain with G-Cter in SUMO2). The segment at 1098–1128 is disordered; that stretch reads AWKEAQEKAAEEEDSQNQHDDSSSDSGTPSG. Glycyl lysine isopeptide (Lys-Gly) (interchain with G-Cter in SUMO2) cross-links involve residues lysine 1202, lysine 1205, lysine 1214, and lysine 1215. The residue at position 1224 (serine 1224) is a Phosphoserine. Residues lysine 1238, lysine 1250, and lysine 1259 each participate in a glycyl lysine isopeptide (Lys-Gly) (interchain with G-Cter in SUMO2) cross-link. Residues 1245–1586 are disordered; sequence LLKKKKGDPD…FTSEPPALPR (342 aa). Threonine 1280 carries the phosphothreonine modification. Residues lysine 1311 and lysine 1315 each participate in a glycyl lysine isopeptide (Lys-Gly) (interchain with G-Cter in SUMO2) cross-link. Basic and acidic residues-rich tracts occupy residues 1322–1332 and 1346–1358; these read PWSDDESKSES and SLLRRAAAERPKY. Phosphoserine is present on residues serine 1324, serine 1328, serine 1330, serine 1332, and serine 1346. At tyrosine 1358 the chain carries Phosphotyrosine. Residues 1362–1379 show a composition bias toward acidic residues; the sequence is FSEEEDDDAAAADDSNDL. Serine 1363 and serine 1376 each carry phosphoserine. Lysine 1385 is covalently cross-linked (Glycyl lysine isopeptide (Lys-Gly) (interchain with G-Cter in SUMO2)). Serine 1387 bears the Phosphoserine mark. A Phosphothreonine modification is found at threonine 1390. Serine 1400 is modified (phosphoserine). Tyrosine 1408 bears the Phosphotyrosine mark. The residue at position 1411 (serine 1411) is a Phosphoserine. Over residues 1417-1429 the composition is skewed to basic and acidic residues; the sequence is ATPEKSSNDKKSQ. Lysine 1427 participates in a covalent cross-link: Glycyl lysine isopeptide (Lys-Gly) (interchain with G-Cter in SUMO2). Residues serine 1428, serine 1439, and serine 1441 each carry the phosphoserine modification. Lysine 1443 participates in a covalent cross-link: Glycyl lysine isopeptide (Lys-Gly) (interchain with G-Cter in SUMO2). Residues 1443–1453 show a composition bias toward basic and acidic residues; that stretch reads KSEDDSAKFDS. A phosphoserine mark is found at serine 1448, serine 1453, and serine 1460. Residue lysine 1477 forms a Glycyl lysine isopeptide (Lys-Gly) (interchain with G-Cter in SUMO2) linkage. The tract at residues 1493 to 1499 is interaction with PLSCR1; the sequence is KAKRAPK. 3 positions are modified to phosphoserine: serine 1509, serine 1511, and serine 1513. The segment covering 1526-1536 has biased composition (basic residues); it reads GKGRGAKKRKA. Serine 1537 and serine 1539 each carry phosphoserine. The segment covering 1550–1561 has biased composition (basic residues); that stretch reads KPSKTASKKPKK. Threonine 1562 is subject to Phosphothreonine. Phosphoserine occurs at positions 1563 and 1568. Tyrosine 1596 is modified (phosphotyrosine). Serine 1600 carries the phosphoserine modification.

It belongs to the type II topoisomerase family. Homodimer. Interacts with KIAA1210. Interacts with PLSCR1. The cofactor is Mg(2+). It depends on Mn(2+) as a cofactor. Requires Ca(2+) as cofactor.

It is found in the nucleus. Its subcellular location is the nucleolus. It localises to the nucleoplasm. The enzyme catalyses ATP-dependent breakage, passage and rejoining of double-stranded DNA.. Key decatenating enzyme that alters DNA topology by binding to two double-stranded DNA molecules, generating a double-stranded break in one of the strands, passing the intact strand through the broken strand, and religating the broken strand. Plays a role in B-cell differentiation. This Mus musculus (Mouse) protein is DNA topoisomerase 2-beta (Top2b).